A 722-amino-acid polypeptide reads, in one-letter code: Glycine--tRNA ligase beta subunit (722 aa).

Belongs to the class-II aminoacyl-tRNA synthetase family. As to quaternary structure, tetramer of two alpha and two beta subunits.

It localises to the cytoplasm. It carries out the reaction tRNA(Gly) + glycine + ATP = glycyl-tRNA(Gly) + AMP + diphosphate. This chain is Glycine--tRNA ligase beta subunit, found in Xylella fastidiosa (strain Temecula1 / ATCC 700964).